Reading from the N-terminus, the 360-residue chain is Protein RecA (360 aa).

65–72 (GPESSGKT) contacts ATP.

This sequence belongs to the RecA family.

It localises to the cytoplasm. Can catalyze the hydrolysis of ATP in the presence of single-stranded DNA, the ATP-dependent uptake of single-stranded DNA by duplex DNA, and the ATP-dependent hybridization of homologous single-stranded DNAs. It interacts with LexA causing its activation and leading to its autocatalytic cleavage. This is Protein RecA from Tolumonas auensis (strain DSM 9187 / NBRC 110442 / TA 4).